Consider the following 320-residue polypeptide: 1,5-anhydro-D-fructose reductase (320 aa).

Aspartate 35 is an NADP(+) binding site. Tyrosine 40 (proton donor) is an active-site residue. Histidine 102 is a binding site for substrate. Residues glutamine 194 and 265–277 each bind NADP(+); that span reads IPGS…IKEN.

This sequence belongs to the aldo/keto reductase family. In terms of assembly, monomer. Specifically expressed in testis. Expressed in testicular germ cells and testis interstitial cells.

The protein resides in the cytoplasm. The enzyme catalyses 1,5-anhydro-D-glucitol + NADP(+) = 1,5-anhydro-D-fructose + NADPH + H(+). Its activity is regulated as follows. Inhibited by p-chloromercuribenzoic acid and alkyliodines. Catalyzes the NADPH-dependent reduction of 1,5-anhydro-D-fructose (AF) to 1,5-anhydro-D-glucitol. Has low NADPH-dependent reductase activity towards 9,10-phenanthrenequinone (in vitro). The chain is 1,5-anhydro-D-fructose reductase (AKR1E2) from Homo sapiens (Human).